The sequence spans 279 residues: 3-methyl-2-oxobutanoate hydroxymethyltransferase 2 (279 aa).

Positions 58 and 97 each coordinate Mg(2+). 3-methyl-2-oxobutanoate contacts are provided by residues 58-59, aspartate 97, and lysine 126; that span reads DS. Position 128 (glutamate 128) interacts with Mg(2+). Residue glutamate 195 is the Proton acceptor of the active site.

This sequence belongs to the PanB family. As to quaternary structure, homodecamer; pentamer of dimers. Requires Mg(2+) as cofactor.

It localises to the cytoplasm. The catalysed reaction is 3-methyl-2-oxobutanoate + (6R)-5,10-methylene-5,6,7,8-tetrahydrofolate + H2O = 2-dehydropantoate + (6S)-5,6,7,8-tetrahydrofolate. It participates in cofactor biosynthesis; (R)-pantothenate biosynthesis; (R)-pantoate from 3-methyl-2-oxobutanoate: step 1/2. Functionally, catalyzes the reversible reaction in which hydroxymethyl group from 5,10-methylenetetrahydrofolate is transferred onto alpha-ketoisovalerate to form ketopantoate. The chain is 3-methyl-2-oxobutanoate hydroxymethyltransferase 2 from Methylibium petroleiphilum (strain ATCC BAA-1232 / LMG 22953 / PM1).